Reading from the N-terminus, the 418-residue chain is MTRAILLVLDSFGIGNAPDAAAFGDAGADTLGHIAHHRAASGRPLALPHLASLGLYHAHHLATGEWAEGITPPETLDGAYAAAAEISSGKDTPSGHWEIAGVPALFEWGYFPDKTQSFPPDLLEALIEQAKLPGVLGNCHASGMPILETLGEAHIASGKPIVYTSADSVFQIAAHETHFGLDRLYALCEIARELLMPYNIGRVIARPFVGETPETFERTGNRRDYAIEPPTPTVLQKLHDDGGKVLGVGKIGDIYAHCGVSNVIKAHGHDALFDATLEALDEAGDRTLVMTNFVDFDTLYGHRRDPDGYAEALEAFDRRLPEVLAKLRPDDLLILTADHGNDPTWTGTDHTREQVPVLASGAGLAPRPLGHDDGHLVTFADIGQSLATHFGLSPMAHGSDFLDVAPTGPSSHASTTGD.

Aspartate 10, aspartate 297, histidine 302, aspartate 338, histidine 339, and histidine 350 together coordinate Mn(2+).

The protein belongs to the phosphopentomutase family. It depends on Mn(2+) as a cofactor.

It is found in the cytoplasm. The catalysed reaction is 2-deoxy-alpha-D-ribose 1-phosphate = 2-deoxy-D-ribose 5-phosphate. It carries out the reaction alpha-D-ribose 1-phosphate = D-ribose 5-phosphate. Its pathway is carbohydrate degradation; 2-deoxy-D-ribose 1-phosphate degradation; D-glyceraldehyde 3-phosphate and acetaldehyde from 2-deoxy-alpha-D-ribose 1-phosphate: step 1/2. Isomerase that catalyzes the conversion of deoxy-ribose 1-phosphate (dRib-1-P) and ribose 1-phosphate (Rib-1-P) to deoxy-ribose 5-phosphate (dRib-5-P) and ribose 5-phosphate (Rib-5-P), respectively. The chain is Phosphopentomutase from Chromohalobacter salexigens (strain ATCC BAA-138 / DSM 3043 / CIP 106854 / NCIMB 13768 / 1H11).